A 126-amino-acid chain; its full sequence is Glycine cleavage system H protein (126 aa).

In terms of domain architecture, Lipoyl-binding spans 21-103 (TVTIGISEHA…YEGGWIVKVK (83 aa)). K62 is subject to N6-lipoyllysine.

The protein belongs to the GcvH family. As to quaternary structure, the glycine cleavage system is composed of four proteins: P, T, L and H. (R)-lipoate is required as a cofactor.

In terms of biological role, the glycine cleavage system catalyzes the degradation of glycine. The H protein shuttles the methylamine group of glycine from the P protein to the T protein. The polypeptide is Glycine cleavage system H protein (Vibrio vulnificus (strain CMCP6)).